A 407-amino-acid polypeptide reads, in one-letter code: Shaggy-related protein kinase GSK1 (407 aa).

Positions 1 to 19 (MEAPPGPEPMELDAPPPPA) are enriched in pro residues. Positions 1-21 (MEAPPGPEPMELDAPPPPAAV) are disordered. In terms of domain architecture, Protein kinase spans 68-352 (YMAERVVGTG…ALDACAHSFF (285 aa)). Residues 74–82 (VGTGSFGIV) and Lys-97 contribute to the ATP site. Asp-193 serves as the catalytic Proton acceptor.

The protein belongs to the protein kinase superfamily. CMGC Ser/Thr protein kinase family. GSK-3 subfamily. In terms of assembly, interacts with LIC. Highly expressed in the entire young panicles, spikelets, awns, vascular bundles of palea and lemma, stigma and rachilla. Expressed in root tips, root hairs, lamina joint in the collar region, vascular bundles of coleoptiles.

The catalysed reaction is L-seryl-[protein] + ATP = O-phospho-L-seryl-[protein] + ADP + H(+). It carries out the reaction L-threonyl-[protein] + ATP = O-phospho-L-threonyl-[protein] + ADP + H(+). Probable serine-threonine kinase that may act as a negative regulator of brassinosteroid (BR) signaling during flower development. May have physiological roles in stress signal-transduction pathways. Phosphorylates LIC in response to BR perception. This Oryza sativa subsp. japonica (Rice) protein is Shaggy-related protein kinase GSK1.